The primary structure comprises 305 residues: UDP-N-acetylenolpyruvoylglucosamine reductase 2 (305 aa).

The 165-residue stretch at 33-197 (VGGKADVFVA…LEARFELEEG (165 aa)) folds into the FAD-binding PCMH-type domain. R176 is a catalytic residue. S226 acts as the Proton donor in catalysis. Residue E296 is part of the active site.

This sequence belongs to the MurB family. The cofactor is FAD.

Its subcellular location is the cytoplasm. The enzyme catalyses UDP-N-acetyl-alpha-D-muramate + NADP(+) = UDP-N-acetyl-3-O-(1-carboxyvinyl)-alpha-D-glucosamine + NADPH + H(+). It functions in the pathway cell wall biogenesis; peptidoglycan biosynthesis. In terms of biological role, cell wall formation. The protein is UDP-N-acetylenolpyruvoylglucosamine reductase 2 of Bacillus cereus (strain ATCC 10987 / NRS 248).